Here is a 233-residue protein sequence, read N- to C-terminus: Putative peroxiredoxin (233 aa).

In terms of domain architecture, Thioredoxin spans 41-200 (AQIGKEAPEF…TIRIVKAIQF (160 aa)). The active-site Cysteine sulfenic acid (-SOH) intermediate is the C87.

This sequence belongs to the peroxiredoxin family. AhpC/Prx1 subfamily. Homodimer; disulfide-linked, upon oxidation.

It is found in the cell membrane. It catalyses the reaction a hydroperoxide + [thioredoxin]-dithiol = an alcohol + [thioredoxin]-disulfide + H2O. Its function is as follows. Thiol-specific peroxidase that catalyzes the reduction of hydrogen peroxide and organic hydroperoxides to water and alcohols, respectively. Plays a role in cell protection against oxidative stress by detoxifying peroxides and as sensor of hydrogen peroxide-mediated signaling events. In Entamoeba histolytica (strain ATCC 30459 / HM-1:IMSS / ABRM), this protein is Putative peroxiredoxin.